The chain runs to 320 residues: 7-acetyl-epi-neemfruitin B aldo-keto reductase (320 aa).

Residue D51 coordinates NADP(+). Y56 functions as the Proton donor in the catalytic mechanism. NADP(+)-binding positions include Q186 and 264–272; that span reads FNKQRMEEN.

It belongs to the aldo/keto reductase family. In terms of tissue distribution, mainly expressed in petioles and, to a lower extent, in roots.

It catalyses the reaction 7-acetyl-epi-neemfruitin B + AH2 + H2O = (1S,3bR,4R,5aR,9aR,9bR,11aS)-1-[(4R)-5-[(2S)-3,3-dimethyloxiran-2-yl]-1,4-dihydroxybutan-2-yl]-3b,6,6,9a,11a-pentamethyl-7-oxo-1H,2H,3bH,4H,5H,5aH,6H,7H,9aH,9bH,10H,11H,11aH-cyclopenta[a]phenanthren-4-yl acetate + acetate + A + H(+). The protein operates within secondary metabolite biosynthesis; terpenoid biosynthesis. In terms of biological role, aldo-keto reductase involved in the biosynthesis of limonoids triterpene natural products such as azadirachtin, an antifeedant widely used as bioinsecticide, and possessing many medicinal applications including anti-tumoral, anti-malarial, anti-rheumatic, antibacterial, anti-inflammatory, anti-pyretic and diuretic effects. Can use 7-acetyl-epi-neemfruitin B as substrate. This chain is 7-acetyl-epi-neemfruitin B aldo-keto reductase, found in Melia azedarach (Chinaberry tree).